We begin with the raw amino-acid sequence, 214 residues long: Probable transaldolase (214 aa).

Residue lysine 83 is the Schiff-base intermediate with substrate of the active site.

This sequence belongs to the transaldolase family. Type 3B subfamily.

It is found in the cytoplasm. The catalysed reaction is D-sedoheptulose 7-phosphate + D-glyceraldehyde 3-phosphate = D-erythrose 4-phosphate + beta-D-fructose 6-phosphate. Its pathway is carbohydrate degradation; pentose phosphate pathway; D-glyceraldehyde 3-phosphate and beta-D-fructose 6-phosphate from D-ribose 5-phosphate and D-xylulose 5-phosphate (non-oxidative stage): step 2/3. In terms of biological role, transaldolase is important for the balance of metabolites in the pentose-phosphate pathway. The protein is Probable transaldolase of Clostridium tetani (strain Massachusetts / E88).